The primary structure comprises 76 residues: ATP synthase subunit 9, mitochondrial (76 aa).

2 helical membrane passes run 11-31 (IGAG…GIVF) and 53-73 (ILGF…AFLI).

Belongs to the ATPase C chain family. In terms of assembly, F-type ATPases have 2 components, CF(1) - the catalytic core - and CF(0) - the membrane proton channel. CF(1) has five subunits: alpha(3), beta(3), gamma(1), delta(1), epsilon(1). CF(0) has three main subunits: a, b and c.

Its subcellular location is the mitochondrion membrane. Functionally, this protein is one of the chains of the nonenzymatic membrane component (F0) of mitochondrial ATPase. The chain is ATP synthase subunit 9, mitochondrial (ATP9) from Chondrus crispus (Carrageen Irish moss).